Here is a 338-residue protein sequence, read N- to C-terminus: D-erythrose-4-phosphate dehydrogenase (338 aa).

Residue 11 to 12 (RI) coordinates NAD(+). Substrate contacts are provided by residues 153-155 (SCT), arginine 199, 212-213 (TK), and arginine 235. Residue cysteine 154 is the Nucleophile of the active site. Asparagine 317 lines the NAD(+) pocket.

Belongs to the glyceraldehyde-3-phosphate dehydrogenase family. Epd subfamily. Homotetramer.

It is found in the cytoplasm. It catalyses the reaction D-erythrose 4-phosphate + NAD(+) + H2O = 4-phospho-D-erythronate + NADH + 2 H(+). The protein operates within cofactor biosynthesis; pyridoxine 5'-phosphate biosynthesis; pyridoxine 5'-phosphate from D-erythrose 4-phosphate: step 1/5. Catalyzes the NAD-dependent conversion of D-erythrose 4-phosphate to 4-phosphoerythronate. The polypeptide is D-erythrose-4-phosphate dehydrogenase (Shewanella piezotolerans (strain WP3 / JCM 13877)).